The sequence spans 680 residues: Protein FAR1-RELATED SEQUENCE 11 (680 aa).

Positions 1–36 (MSDDPGQMLLIYDDPSDQRSLSLDDASSTEESPDDN) are disordered. The region spanning 62–156 (EFYSTFAKRC…ANHHNHELLE (95 aa)) is the FAR1 domain. An MULE domain is found at 277-373 (AVVFDTTHRL…CIWMVVGKFP (97 aa)). An SWIM-type zinc finger spans residues 556–589 (YWVPQEGIISCSCQLFEFSGFLCRHALRVLSTGN).

Belongs to the FHY3/FAR1 family. As to expression, expressed in hypocotyls, rosette and cauline leaves, inflorescences stems, flowers and siliques.

The protein localises to the nucleus. In terms of biological role, putative transcription activator involved in regulating light control of development. This Arabidopsis thaliana (Mouse-ear cress) protein is Protein FAR1-RELATED SEQUENCE 11 (FRS11).